An 853-amino-acid polypeptide reads, in one-letter code: MSAIENFDAHTPMMQQYLRLKAQHPEILLFYRMGDFYELFYDDAKRASQLLDISLTKRGASAGEPIPMAGIPYHAVENYLAKLVNQGESVAICEQIGDPATSKGPVERKVVRIVTPGTISDEALLQERQDNLLAAIWQDSKGFGYATLDISSGRFRLSEPADRETMAAELQRTNPAELLYAEDFAEMSLIEGRRGLRRRPLWEFEIDTARQQLNLQFGTRDLVGFGVENAPRGLCAAGCLLQYAKDTQRTTLPHIRSITMEREQDSIIMDAATRRNLEITQNLAGGAENTLASVLDCTVTPMGSRMLKRWLHMPVRDTRVLLERQQTIGALQDFTAGLQPVLRQVGDLERILARLALRTARPRDLARMRHAFQQLPELRAQLETVDSAPVQALREKMGEFAELRDLLERAIIDTPPVLVRDGGVIASGYNEELDEWRALADGATDYLERLEVRERERTGLDTLKVGFNAVHGYYIQISRGQSHLAPINYMRRQTLKNAERYIIPELKEYEDKVLTSKGKALALEKQLYEELFDLLLPHLEALQQSASALAELDVLVNLAERAYTLNYTCPTFIDKPGIRITEGRHPVVEQVLNEPFIANPLNLSPQRRMLIITGPNMGGKSTYMRQTALIALMAYIGSYVPAQKVEIGPIDRIFTRVGAADDLASGRSTFMVEMTETANILHNATEYSLVLMDEIGRGTSTYDGLSLAWACAENLANKIKALTLFATHYFELTQLPEKMEDVANVHLDALEHGDTIAFMHSVQDGAASKSYGLAVAALAGVPKEVIKRARQKLRELESISPNAAATQVDGTQMSLLSVPEETSPAVEALENLDPDSLTPRQALEWIYRLKSLV.

Residue 614-621 (GPNMGGKS) participates in ATP binding.

It belongs to the DNA mismatch repair MutS family.

In terms of biological role, this protein is involved in the repair of mismatches in DNA. It is possible that it carries out the mismatch recognition step. This protein has a weak ATPase activity. This Shigella boydii serotype 18 (strain CDC 3083-94 / BS512) protein is DNA mismatch repair protein MutS.